Here is a 201-residue protein sequence, read N- to C-terminus: Ras-related protein Rab-5A (201 aa).

GTP is bound by residues 16-24 (GEAAVGKSS), 35-41 (LDYQEST), 64-68 (DTAGQ), 122-125 (NKLD), and 152-154 (SAK). Residues 38–46 (QESTIGAAF) carry the Effector region motif. Residues Cys199 and Cys200 are each lipidated (S-geranylgeranyl cysteine).

It belongs to the small GTPase superfamily. Rab family.

The protein resides in the cell membrane. Its subcellular location is the endosome membrane. With respect to regulation, regulated by guanine nucleotide exchange factors (GEFs) which promote the exchange of bound GDP for free GTP. Its function is as follows. Required for the fusion of plasma membranes and early endosomes. The sequence is that of Ras-related protein Rab-5A (rab5A) from Dictyostelium discoideum (Social amoeba).